The following is a 542-amino-acid chain: Homeobox and leucine zipper protein Homez (542 aa).

Positions W55–W114 form a DNA-binding region, homeobox 1. Residues L165–L193 are disordered. Glycyl lysine isopeptide (Lys-Gly) (interchain with G-Cter in SUMO2) cross-links involve residues K181 and K201. Residues V250–S307 form a disordered region. A compositionally biased stretch (low complexity) spans P272–S285. Positions F286–T296 are enriched in polar residues. Residue S345 is modified to Phosphoserine. 2 consecutive DNA-binding regions (homeobox) follow at residues Q349 to Q409 and T443 to V502. A Nuclear localization signal motif is present at residues R352–K357. Disordered stretches follow at residues F424 to D454 and V501 to D542. Phosphothreonine is present on T443. Residues P444–D454 show a composition bias toward pro residues. Residues L505–D542 show a composition bias toward acidic residues.

Homodimer or heterodimer (Potential). Interacts with HOXC8. In terms of tissue distribution, ubiquitous. Strongly expressed in testis.

It localises to the nucleus. Functionally, may function as a transcriptional regulator. The polypeptide is Homeobox and leucine zipper protein Homez (Homez) (Mus musculus (Mouse)).